Reading from the N-terminus, the 130-residue chain is Small ribosomal subunit protein uS11 (130 aa).

This sequence belongs to the universal ribosomal protein uS11 family. As to quaternary structure, part of the 30S ribosomal subunit. Interacts with proteins S7 and S18. Binds to IF-3.

In terms of biological role, located on the platform of the 30S subunit, it bridges several disparate RNA helices of the 16S rRNA. Forms part of the Shine-Dalgarno cleft in the 70S ribosome. This is Small ribosomal subunit protein uS11 from Prochlorococcus marinus (strain MIT 9313).